Consider the following 204-residue polypeptide: Recombination protein RecR (204 aa).

The C4-type zinc-finger motif lies at 58–75; sequence CTICQNITDVGTDPCAIC. Positions 83–181 constitute a Toprim domain; sequence TVICVVESPV…AVTKIARGIP (99 aa).

It belongs to the RecR family.

Its function is as follows. May play a role in DNA repair. It seems to be involved in an RecBC-independent recombinational process of DNA repair. It may act with RecF and RecO. This Chlorobium chlorochromatii (strain CaD3) protein is Recombination protein RecR.